The primary structure comprises 251 residues: MVDKSQETTHFGFQTVAKEQKADMVAHVFHSVASKYDVMNDLMSFGIHRLWKRFTIDCSGVRRGQTVLDLAGGTGDLTAKFSRMVGETGKVVLADINESMLKMGREKLRNIGVIGNVEYVQANAEALPFPDNTFDCITISFGLRNVTEKEKALRSMYRVLKPGGRLLVLEFSKPIIEPLSKAYDAYSFHILPRIGSLVANDADSYRYLAESIRMHPDQDTLKAMMEDAGFESVDYYNLTAGVVALHRGYKF.

S-adenosyl-L-methionine contacts are provided by residues Thr-74, Asp-95, 123–124 (NA), and Ser-140.

Belongs to the class I-like SAM-binding methyltransferase superfamily. MenG/UbiE family.

It catalyses the reaction a 2-demethylmenaquinol + S-adenosyl-L-methionine = a menaquinol + S-adenosyl-L-homocysteine + H(+). It carries out the reaction a 2-methoxy-6-(all-trans-polyprenyl)benzene-1,4-diol + S-adenosyl-L-methionine = a 5-methoxy-2-methyl-3-(all-trans-polyprenyl)benzene-1,4-diol + S-adenosyl-L-homocysteine + H(+). Its pathway is quinol/quinone metabolism; menaquinone biosynthesis; menaquinol from 1,4-dihydroxy-2-naphthoate: step 2/2. It functions in the pathway cofactor biosynthesis; ubiquinone biosynthesis. Functionally, methyltransferase required for the conversion of demethylmenaquinol (DMKH2) to menaquinol (MKH2) and the conversion of 2-polyprenyl-6-methoxy-1,4-benzoquinol (DDMQH2) to 2-polyprenyl-3-methyl-6-methoxy-1,4-benzoquinol (DMQH2). This is Ubiquinone/menaquinone biosynthesis C-methyltransferase UbiE from Escherichia fergusonii (strain ATCC 35469 / DSM 13698 / CCUG 18766 / IAM 14443 / JCM 21226 / LMG 7866 / NBRC 102419 / NCTC 12128 / CDC 0568-73).